A 395-amino-acid chain; its full sequence is THP3 homolog C2A9.11c (395 aa).

The segment at 91–127 (LLSEEDEVDKKEKRRRRFENGSRSQNNAKSEELKVNP) is disordered. Residues 218-384 (DVGEYNQCQT…STDRFEKCMK (167 aa)) enclose the PCI domain.

The protein belongs to the THP3 family.

It is found in the cytoplasm. The protein localises to the nucleus. Functionally, required for transcription elongation. May also be involved in pre-mRNA splicing. This Schizosaccharomyces pombe (strain 972 / ATCC 24843) (Fission yeast) protein is THP3 homolog C2A9.11c.